A 306-amino-acid polypeptide reads, in one-letter code: TnpB-like protein aq_aa05 (306 aa).

4 residues coordinate Zn(2+): Cys213, Cys216, Cys234, and Cys237.

It belongs to the transposase 35 family.

This chain is TnpB-like protein aq_aa05, found in Aquifex aeolicus (strain VF5).